A 97-amino-acid polypeptide reads, in one-letter code: MKLRPLHDRVVIRRSEEESKTAGGIVLPGSAAEKPNRGEVVAVGTGRILENGEVRALAVKVGDKVVFGPYSGSNTVKVDGEDLLVMAENEILAVIEG.

The protein belongs to the GroES chaperonin family. In terms of assembly, heptamer of 7 subunits arranged in a ring. Interacts with the chaperonin GroEL.

The protein resides in the cytoplasm. In terms of biological role, together with the chaperonin GroEL, plays an essential role in assisting protein folding. The GroEL-GroES system forms a nano-cage that allows encapsulation of the non-native substrate proteins and provides a physical environment optimized to promote and accelerate protein folding. GroES binds to the apical surface of the GroEL ring, thereby capping the opening of the GroEL channel. This Pseudomonas putida (strain GB-1) protein is Co-chaperonin GroES.